The primary structure comprises 366 residues: DNA-directed RNA polymerase subunit alpha (366 aa).

Residues 1–233 (MVREKVRVST…DLFLPFLHAE (233 aa)) form an alpha N-terminal domain (alpha-NTD) region. An alpha C-terminal domain (alpha-CTD) region spans residues 264 to 366 (KNEIALKSIF…KDEMGFESLE (103 aa)).

The protein belongs to the RNA polymerase alpha chain family. As to quaternary structure, in plastids the minimal PEP RNA polymerase catalytic core is composed of four subunits: alpha, beta, beta', and beta''. When a (nuclear-encoded) sigma factor is associated with the core the holoenzyme is formed, which can initiate transcription.

It is found in the plastid. The protein localises to the chloroplast. It catalyses the reaction RNA(n) + a ribonucleoside 5'-triphosphate = RNA(n+1) + diphosphate. In terms of biological role, DNA-dependent RNA polymerase catalyzes the transcription of DNA into RNA using the four ribonucleoside triphosphates as substrates. The chain is DNA-directed RNA polymerase subunit alpha from Oenothera elata subsp. hookeri (Hooker's evening primrose).